We begin with the raw amino-acid sequence, 533 residues long: Probable nucleolar protein 5-1 (533 aa).

One can recognise a Nop domain in the interval I280 to G398. The disordered stretch occupies residues G402–V533. Residues P412 to K423 are compositionally biased toward basic and acidic residues. The segment covering K433–S450 has biased composition (polar residues). Basic and acidic residues-rich tracts occupy residues T474–A489 and M515–E524.

This sequence belongs to the NOP5/NOP56 family.

It localises to the nucleus. The protein localises to the nucleolus. Functionally, required for 60S ribosomal subunit biogenesis. The protein is Probable nucleolar protein 5-1 (NOP5-1) of Arabidopsis thaliana (Mouse-ear cress).